The sequence spans 343 residues: Protease inhibitor Egf1.5a (343 aa).

Positions 1–28 are cleaved as a signal peptide; it reads MYIDTGIMSNNIFLFAFFALVGLTRIEA. The region spanning 52 to 104 is the TIL domain; the sequence is CRENEHYNSTRIECEDECNDRNNKLCYRFQQFCWCNEGYIRNSSHICVKLEDC.

Belongs to the polydnaviridae EGF-like motif protein family. As to quaternary structure, interacts with host PAP1, PAP3 and SPH2.

Counteracts the host humoral immune response by inhibiting the processing and the amidolytic activity of host PAP1 and PAP3. Thereby, melanization of host hemolymph, normally producing several reactive intermediates toxic for viruses, is deregulated and proper immune response cannot occur. The polypeptide is Protease inhibitor Egf1.5a (O1) (Microplitis demolitor bracovirus (isolate Webb) (MdBV)).